A 328-amino-acid polypeptide reads, in one-letter code: D-cysteine desulfhydrase (328 aa).

K51 bears the N6-(pyridoxal phosphate)lysine mark.

This sequence belongs to the ACC deaminase/D-cysteine desulfhydrase family. As to quaternary structure, homodimer. Pyridoxal 5'-phosphate serves as cofactor.

It carries out the reaction D-cysteine + H2O = hydrogen sulfide + pyruvate + NH4(+) + H(+). Functionally, catalyzes the alpha,beta-elimination reaction of D-cysteine and of several D-cysteine derivatives. It could be a defense mechanism against D-cysteine. This is D-cysteine desulfhydrase from Escherichia fergusonii (strain ATCC 35469 / DSM 13698 / CCUG 18766 / IAM 14443 / JCM 21226 / LMG 7866 / NBRC 102419 / NCTC 12128 / CDC 0568-73).